The primary structure comprises 375 residues: Trichodiene synthase (375 aa).

It belongs to the trichodiene synthase family.

It carries out the reaction (2E,6E)-farnesyl diphosphate = trichodiene + diphosphate. It participates in sesquiterpene biosynthesis; trichothecene biosynthesis. TS is a member of the terpene cyclase group of enzymes. It catalyzes the isomerization and cyclization of farnesyl pyro-phosphate to form trichodiene, the first cyclic intermediate in the biosynthetic pathway for trichothecenes. It serves to branch trichothecene biosynthesis from the isoprenoid pathway. The polypeptide is Trichodiene synthase (TRI5) (Fusarium cortaderiae).